A 98-amino-acid polypeptide reads, in one-letter code: ESAT-6-like protein EsxW (98 aa).

The protein belongs to the WXG100 family. CFP-10 subfamily. In terms of assembly, forms a tight 1:1 complex with EsxV. The complex is destabilized at low pH. Unfolding of the proteins is required for dissociation of the complex and membrane binding.

The protein localises to the secreted. This is ESAT-6-like protein EsxW from Mycobacterium tuberculosis (strain ATCC 25618 / H37Rv).